The following is a 106-amino-acid chain: Ferredoxin (106 aa).

Residues C9 and C17 each contribute to the [3Fe-4S] cluster site. [4Fe-4S] cluster-binding residues include C21, C40, C43, and C46. A 4Fe-4S ferredoxin-type domain is found at 31–60; the sequence is RMLYIHPDECVDCGACEPVCPVEAIYYEDD. [3Fe-4S] cluster is bound at residue C50. The segment at 84-106 is disordered; the sequence is GAAKVGKVDRDVEPVSSLPPQGE.

[4Fe-4S] cluster is required as a cofactor. Requires [3Fe-4S] cluster as cofactor.

Its function is as follows. Ferredoxins are iron-sulfur proteins that transfer electrons in a wide variety of metabolic reactions. This is Ferredoxin (fdxA) from Saccharopolyspora erythraea (Streptomyces erythraeus).